Here is a 219-residue protein sequence, read N- to C-terminus: Probable GTP-binding protein EngB (219 aa).

The 175-residue stretch at Val31 to Pro205 folds into the EngB-type G domain. Residues Gly39–Ser46, Gly66–Leu70, Asp84–Gly87, Thr151–Asp154, and Phe184–Ser186 contribute to the GTP site. Residues Ser46 and Thr68 each coordinate Mg(2+).

This sequence belongs to the TRAFAC class TrmE-Era-EngA-EngB-Septin-like GTPase superfamily. EngB GTPase family. Mg(2+) is required as a cofactor.

Necessary for normal cell division and for the maintenance of normal septation. In Shewanella denitrificans (strain OS217 / ATCC BAA-1090 / DSM 15013), this protein is Probable GTP-binding protein EngB.